Reading from the N-terminus, the 747-residue chain is Kinesin-like protein KIF3B (747 aa).

Methionine 1 is subject to N-acetylmethionine. Serine 2 is subject to N-acetylserine; in Kinesin-like protein KIF3B, N-terminally processed. Residues 9–340 (SVRVVVRCRP…LRYANRAKNI (332 aa)) enclose the Kinesin motor domain. Residue 96–103 (GQTGTGKT) coordinates ATP. A coiled-coil region spans residues 346–579 (VNEDPKDALL…EQTQNELTRE (234 aa)). Disordered regions lie at residues 374-412 (IGRRKRREKRREGGGSGGGGEEEEEEGEEGEEEGDDKDD) and 699-747 (QVDA…LVPK). Acidic residues predominate over residues 393-411 (GEEEEEEGEEGEEEGDDKD). The segment at 580-747 (LKLKHLIIEN…YPQSRGLVPK (168 aa)) is globular. Polar residues predominate over residues 701–710 (DASSFESTAN). The span at 711 to 721 (KKSKARPKSGR) shows a compositional bias: basic residues. Residues 722–735 (KSGSSSSSSGTPAS) show a composition bias toward low complexity.

This sequence belongs to the TRAFAC class myosin-kinesin ATPase superfamily. Kinesin family. Kinesin II subfamily. As to quaternary structure, heterodimer of KIF3A and KIF3B. KIF3A/KIF3B heterodimer interacts with KIFAP3 forming a heterotrimeric (KIF3A/KIF3B/KIFAP3) complex. Interacts directly with IFT20. Interacts with the SMC3 subunit of the cohesin complex. Interacts with FLCN.

The protein resides in the cytoplasm. It localises to the cytoskeleton. It is found in the cell projection. Its subcellular location is the cilium. The protein localises to the dendritic spine. Its function is as follows. Microtubule-based molecular motor that transport intracellular cargos, such as vesicles, organelles and protein complexes. Uses ATP hydrolysis to generate force to bind and move along the microtubule. Plays a role in cilia formation. Involved in photoreceptor integrity and opsin trafficking in rod photoreceptors. Transports vesicles containing N-methyl-D-aspartate (NMDA) receptor subunit GRIN2A into neuronal dendrites. The sequence is that of Kinesin-like protein KIF3B (KIF3B) from Homo sapiens (Human).